The primary structure comprises 149 residues: SsrA-binding protein (149 aa).

The protein belongs to the SmpB family.

The protein resides in the cytoplasm. Functionally, required for rescue of stalled ribosomes mediated by trans-translation. Binds to transfer-messenger RNA (tmRNA), required for stable association of tmRNA with ribosomes. tmRNA and SmpB together mimic tRNA shape, replacing the anticodon stem-loop with SmpB. tmRNA is encoded by the ssrA gene; the 2 termini fold to resemble tRNA(Ala) and it encodes a 'tag peptide', a short internal open reading frame. During trans-translation Ala-aminoacylated tmRNA acts like a tRNA, entering the A-site of stalled ribosomes, displacing the stalled mRNA. The ribosome then switches to translate the ORF on the tmRNA; the nascent peptide is terminated with the 'tag peptide' encoded by the tmRNA and targeted for degradation. The ribosome is freed to recommence translation, which seems to be the essential function of trans-translation. This Acholeplasma laidlawii (strain PG-8A) protein is SsrA-binding protein.